The sequence spans 286 residues: Nucleoid occlusion protein (286 aa).

The segment at residues 147–166 (EALAQRLGKNQSTVANKLRL) is a DNA-binding region (H-T-H motif).

Belongs to the ParB family.

It localises to the cytoplasm. The protein resides in the nucleoid. Functionally, effects nucleoid occlusion by binding relatively nonspecifically to DNA and preventing the assembly of the division machinery in the vicinity of the nucleoid, especially under conditions that disturb the cell cycle. It helps to coordinate cell division and chromosome segregation by preventing the formation of the Z ring through the nucleoid, which would cause chromosome breakage. The chain is Nucleoid occlusion protein from Oceanobacillus iheyensis (strain DSM 14371 / CIP 107618 / JCM 11309 / KCTC 3954 / HTE831).